Consider the following 1011-residue polypeptide: Poly [ADP-ribose] polymerase 1 (1011 aa).

PARP-type zinc fingers lie at residues 9–91 and 113–203; these read YRAE…ETGA and FAAE…PATK. Residues Cys-21, Cys-24, His-53, Cys-56, Cys-125, Cys-128, His-159, and Cys-162 each coordinate Zn(2+). The tract at residues 198-235 is disordered; the sequence is QLPATKTEGKRKGEEVDGNVVAKKKSRKEKEKESKQEK. 2 consecutive short sequence motifs (nuclear localization signal) follow at residues 207-209 and 220-225; these read KRK and KKKSRK. The PADR1 zinc-binding domain maps to 224 to 358; sequence RKEKEKESKQ…CKKQDRIFPP (135 aa). Basic and acidic residues predominate over residues 225 to 235; it reads KEKEKESKQEK. The zinc ribbon stretch occupies residues 289–331; it reads GALLPCEECKGQFVFKSDAYYCSGDITAWTKCVAKTQTPNRKD. The Zn(2+) site is built by Cys-294, Cys-297, Cys-310, and Cys-320. The interval 359–378 is disordered; that stretch reads EAATVNSAPPPPASAPLTET. The automodification domain stretch occupies residues 371–522; the sequence is ASAPLTETVT…PSKSEKKMKL (152 aa). The 92-residue stretch at 382 to 473 folds into the BRCT domain; it reads PQDKPLTNMK…KGFQELLSLH (92 aa). PolyADP-ribosyl glutamic acid occurs at positions 403, 404, 410, 411, 432, 434, 441, 442, 453, 454, 468, 481, 485, 488, 509, 510, and 517. Residues 496–519 are disordered; the sequence is SKPANMKSAGKVKEEQGPSKSEKK. The segment covering 506-519 has biased composition (basic and acidic residues); that stretch reads KVKEEQGPSKSEKK. Positions 539 to 635 constitute a WGR domain; sequence SAHVFEKGGK…KNFTKYPKKF (97 aa). One can recognise a PARP alpha-helical domain in the interval 659–776; the sequence is KSKLAKPIQD…DIEVAYSLLR (118 aa). Residues 785–1011 form the PARP catalytic domain; the sequence is DPIDINYEKL…LKFNYKTSLW (227 aa). NAD(+)-binding positions include 859 to 861, Gly-868, Arg-875, and Ser-901; that span reads HGS. Residue Glu-985 is the For poly [ADP-ribose] polymerase activity of the active site.

It belongs to the ARTD/PARP family. As to quaternary structure, homodimer; PARP-type zinc-fingers from separate parp1 molecules form a dimer module that specifically recognizes DNA strand breaks. In terms of processing, poly-ADP-ribosylated on serine, glutamate and aspartate residues by autocatalysis. Auto-ADP-ribosylation on serine takes place following interaction with HPF1. Auto poly-ADP-ribosylation on serine residues promotes its dissociation from chromatin.

The protein localises to the chromosome. It is found in the nucleus. It localises to the nucleolus. The protein resides in the cytoplasm. Its subcellular location is the cytosol. It carries out the reaction NAD(+) + (ADP-D-ribosyl)n-acceptor = nicotinamide + (ADP-D-ribosyl)n+1-acceptor + H(+).. It catalyses the reaction L-seryl-[protein] + NAD(+) = O-(ADP-D-ribosyl)-L-seryl-[protein] + nicotinamide + H(+). The catalysed reaction is L-aspartyl-[protein] + NAD(+) = 4-O-(ADP-D-ribosyl)-L-aspartyl-[protein] + nicotinamide. The enzyme catalyses L-glutamyl-[protein] + NAD(+) = 5-O-(ADP-D-ribosyl)-L-glutamyl-[protein] + nicotinamide. It carries out the reaction L-tyrosyl-[protein] + NAD(+) = O-(ADP-D-ribosyl)-L-tyrosyl-[protein] + nicotinamide + H(+). It catalyses the reaction L-histidyl-[protein] + NAD(+) = N(tele)-(ADP-D-ribosyl)-L-histidyl-[protein] + nicotinamide + H(+). With respect to regulation, ADP-ribosyltransferase activity is regulated via an allosteric activation mechanism. In absence of activation signal, parp1 is autoinhibited by the PARP alpha-helical domain (also named HD region), which prevents effective NAD(+)-binding. Activity is highly stimulated by signals, such as DNA strand breaks. Binding to damaged DNA unfolds the PARP alpha-helical domain, relieving autoinhibition. Poly-ADP-ribosyltransferase activity is tightly regulated and parp1 is removed from damaged chromatin following initial poly-ADP-ribosylation of chromatin to avoid prolonged residence (trapping) that has cytotoxic consequences. A number of factors or post-translational modifications (auto-poly-ADP-ribosylation) promote parp1 removal from chromatin. Its function is as follows. Poly-ADP-ribosyltransferase that mediates poly-ADP-ribosylation of proteins and plays a key role in DNA repair. Mediates glutamate, aspartate, serine, histidine or tyrosine ADP-ribosylation of proteins: the ADP-D-ribosyl group of NAD(+) is transferred to the acceptor carboxyl group of target residues and further ADP-ribosyl groups are transferred to the 2'-position of the terminal adenosine moiety, building up a polymer with an average chain length of 20-30 units. Serine ADP-ribosylation of proteins constitutes the primary form of ADP-ribosylation of proteins in response to DNA damage. Specificity for the different amino acids is conferred by interacting factors, such as hpf1 and nmnat1. Following interaction with hpf1, catalyzes serine ADP-ribosylation of target proteins; hpf1 confers serine specificity by completing the parp1 active site. Also catalyzes tyrosine ADP-ribosylation of target proteins following interaction with hpf1. Following interaction with nmnat1, catalyzes glutamate and aspartate ADP-ribosylation of target proteins; nmnat1 confers glutamate and aspartate specificity. Parp1 initiates the repair of DNA breaks: recognizes and binds DNA breaks within chromatin and recruits hpf1, licensing serine ADP-ribosylation of target proteins, such as histones (H2BS6ADPr and H3S10ADPr), thereby promoting decompaction of chromatin and the recruitment of repair factors leading to the reparation of DNA strand breaks. In addition to base excision repair (BER) pathway, also involved in double-strand breaks (DSBs) repair. Mediates the poly-ADP-ribosylation of a number of proteins. In addition to proteins, also able to ADP-ribosylate DNA: catalyzes ADP-ribosylation of DNA strand break termini containing terminal phosphates and a 2'-OH group in single- and double-stranded DNA, respectively. Parp1-mediated DNA repair in neurons plays a role in sleep: senses DNA damage in neurons and promotes sleep, facilitating efficient DNA repair. In addition to DNA repair, also involved in other processes, such as transcription regulation, programmed cell death, membrane repair, adipogenesis and innate immunity. Acts as a repressor of transcription: binds to nucleosomes and modulates chromatin structure in a manner similar to histone H1, thereby altering RNA polymerase II. Acts both as a positive and negative regulator of transcription elongation, depending on the context. Poly-ADP-ribose chains generated by parp1 also play a role in poly-ADP-ribose-dependent cell death, a process named parthanatos. Also acts as a negative regulator of the cGAS-STING pathway by mediating poly-ADP-ribosylation and inactivation of cgas. Acts as a negative regulator of adipogenesis by catalyzing poly ADP-ribosylation of histone H2B on 'Glu-35' (H2BE35ADPr). The protein is Poly [ADP-ribose] polymerase 1 (PARP1) of Gallus gallus (Chicken).